We begin with the raw amino-acid sequence, 1257 residues long: Endochitinase A (1257 aa).

The first 21 residues, Met-1 to Ala-21, serve as a signal peptide directing secretion. Residues Ser-28–Val-339 form the GH18 domain. Glu-175 functions as the Proton donor in the catalytic mechanism. Disordered regions lie at residues Thr-364–Val-429, Thr-595–Ile-980, and Asp-1141–Thr-1174. The segment covering Thr-595–Val-696 has biased composition (low complexity). Residues Lys-700–Ile-715 show a composition bias toward polar residues. Low complexity predominate over residues Ala-716 to Thr-935. A glycan (N-linked (GlcNAc...) asparagine) is linked at Asn-825. The segment covering His-940–Thr-964 has biased composition (polar residues). Residue Asn-973 is glycosylated (N-linked (GlcNAc...) asparagine). The span at Ala-1145–Gly-1154 shows a compositional bias: polar residues. Positions Ser-1156–Thr-1174 are enriched in low complexity. Gly-1231 carries the GPI-anchor amidated glycine lipid modification. Positions Ala-1232–Ile-1257 are cleaved as a propeptide — removed in mature form.

The protein belongs to the glycosyl hydrolase 18 family. Chitinase class III subfamily. Post-translationally, O-glycosylated.

Its subcellular location is the cell membrane. It is found in the secreted. It localises to the cell wall. The enzyme catalyses Random endo-hydrolysis of N-acetyl-beta-D-glucosaminide (1-&gt;4)-beta-linkages in chitin and chitodextrins.. Functionally, GPI-anchored chitinase involved in the degradation of chitin, a component of the cell walls of fungi and exoskeletal elements of some animals (including worms and arthropods). Required to reshape the cell wall at the sites where cell wall remodeling and/or cell wall maturation actively take place such as sites of conidia formation. The sequence is that of Endochitinase A (ctcA) from Aspergillus niger (strain ATCC MYA-4892 / CBS 513.88 / FGSC A1513).